The sequence spans 230 residues: Flagellar L-ring protein (230 aa).

An N-terminal signal peptide occupies residues 1-22; sequence MSPISNFARIALACTVAALLGG. Cysteine 23 carries N-palmitoyl cysteine lipidation. Cysteine 23 is lipidated: S-diacylglycerol cysteine.

Belongs to the FlgH family. In terms of assembly, the basal body constitutes a major portion of the flagellar organelle and consists of four rings (L,P,S, and M) mounted on a central rod.

It localises to the cell outer membrane. The protein localises to the bacterial flagellum basal body. Functionally, assembles around the rod to form the L-ring and probably protects the motor/basal body from shearing forces during rotation. In Stenotrophomonas maltophilia (strain K279a), this protein is Flagellar L-ring protein.